A 382-amino-acid polypeptide reads, in one-letter code: uncharacterized protein (382 aa).

This is an uncharacterized protein from Orgyia pseudotsugata multicapsid polyhedrosis virus (OpMNPV).